A 99-amino-acid polypeptide reads, in one-letter code: MDLAFELRKAMETGKVVLGSNETIRLAKTGGAKLIIVAKNAPKEIKDDIYYYAKLSDIPVYEFEGTSVELGTLLGKPFVVASLAIVDPGESKILAIAKR.

This sequence belongs to the eukaryotic ribosomal protein eL30 family. In terms of assembly, part of the 50S ribosomal subunit.

The chain is Large ribosomal subunit protein eL30 from Pyrococcus furiosus (strain ATCC 43587 / DSM 3638 / JCM 8422 / Vc1).